We begin with the raw amino-acid sequence, 370 residues long: GTPase Obg (370 aa).

The 159-residue stretch at 1–159 (MKFIDEARIE…RMLRLELKVL (159 aa)) folds into the Obg domain. A disordered region spans residues 127 to 146 (NLHFKSSTNRAPRQKTDGKP). An OBG-type G domain is found at 160-334 (ADVGLLGMPN…LCYAIYDYLA (175 aa)). GTP is bound by residues 166 to 173 (GMPNAGKS), 191 to 195 (FTTLA), 213 to 216 (DIPG), 284 to 287 (NKLD), and 315 to 317 (SAL). 2 residues coordinate Mg(2+): S173 and T193.

Belongs to the TRAFAC class OBG-HflX-like GTPase superfamily. OBG GTPase family. As to quaternary structure, monomer. Requires Mg(2+) as cofactor.

It localises to the cytoplasm. Its function is as follows. An essential GTPase which binds GTP, GDP and possibly (p)ppGpp with moderate affinity, with high nucleotide exchange rates and a fairly low GTP hydrolysis rate. Plays a role in control of the cell cycle, stress response, ribosome biogenesis and in those bacteria that undergo differentiation, in morphogenesis control. This Burkholderia lata (strain ATCC 17760 / DSM 23089 / LMG 22485 / NCIMB 9086 / R18194 / 383) protein is GTPase Obg.